Reading from the N-terminus, the 469-residue chain is Swarming motility regulation sensor protein RssA (469 aa).

A run of 2 helical transmembrane segments spans residues 12–32 (IIFQ…WVKY) and 167–187 (VPLL…AYFS). Residues 245-459 (DAAHELRTPI…GFIIDLPESY (215 aa)) form the Histidine kinase domain. The residue at position 248 (His-248) is a Phosphohistidine; by autocatalysis.

Its subcellular location is the cell inner membrane. It carries out the reaction ATP + protein L-histidine = ADP + protein N-phospho-L-histidine.. Functionally, member of the two-component regulatory system RssA/RssB involved in regulation of swarming motility which has been shown to be inhibited by saturated fatty acids. RssA/RssB regulates cellular fatty acid composition, hemolysin production and cell surface topography. RssA/RssB negatively regulates the activity of SlhBA. It can also act as a negative regulator for the control of the swarming initiation. The protein is Swarming motility regulation sensor protein RssA (rssA) of Serratia marcescens.